Here is a 362-residue protein sequence, read N- to C-terminus: Aminomethyltransferase (362 aa).

Belongs to the GcvT family. The glycine cleavage system is composed of four proteins: P, T, L and H.

The enzyme catalyses N(6)-[(R)-S(8)-aminomethyldihydrolipoyl]-L-lysyl-[protein] + (6S)-5,6,7,8-tetrahydrofolate = N(6)-[(R)-dihydrolipoyl]-L-lysyl-[protein] + (6R)-5,10-methylene-5,6,7,8-tetrahydrofolate + NH4(+). Functionally, the glycine cleavage system catalyzes the degradation of glycine. The polypeptide is Aminomethyltransferase (Bacillus subtilis (strain 168)).